The primary structure comprises 196 residues: Recombination protein RecR (196 aa).

Residues 57-72 (CERCHTFTEGAVCETC) form a C4-type zinc finger. The 96-residue stretch at 80-175 (TRLCVVETPA…HVTRLARGVP (96 aa)) folds into the Toprim domain.

The protein belongs to the RecR family.

Functionally, may play a role in DNA repair. It seems to be involved in an RecBC-independent recombinational process of DNA repair. It may act with RecF and RecO. This chain is Recombination protein RecR, found in Acidovorax sp. (strain JS42).